Consider the following 577-residue polypeptide: MNIQEIISDKVTQALVAAGAPAGSEALVRPSAKVQFGDYQANGIMSAAKKMGLPPRQLAEQVVANLALDGIASKVEIAGPGFINIFLDAAWLAAQADAALADPRLGVARVEPQTIVVDYSAPNVAKEMHVGHLRSTIIGDAAVRTLEFLGHNVIRANHVGDWGTQFGMLIAYLEKVQGSSETGDMALADLEAFYREAKKHYDEDAAFAERARGYVVKLQGGDEYCREMWRKLVDITMRQNQRNYDRLNVTLTDDDVMGESLYNPMLPGIVADLKAKGLATESEGATVVFLNEFRNKEGEPMGVIVQKKDGGYLYTTTDIACAKYRYETLGANRILYYIDSRQHQHLMQAWTIVRKAGYVPDSVSLEHHMFGMMLGKDGKPFKTRAGGTIKLADLLDEAIERAAKLIAAKNPELSGDELKALVEVVGIGAVKYADLSKNRTTDYIFDWDNMLAFEGNTAPYMQYAYTRVASIFKRAGIDENTLQGAITLTEEREKALATRLMQFEETILSVAREGTPHVMCAYLYEVAGLFSSFYEACPILNAEEESVRASRLKLAALTARTLKTGLDTLGIKTVERM.

Residues 122-132 (PNVAKEMHVGH) carry the 'HIGH' region motif.

This sequence belongs to the class-I aminoacyl-tRNA synthetase family. As to quaternary structure, monomer.

Its subcellular location is the cytoplasm. It carries out the reaction tRNA(Arg) + L-arginine + ATP = L-arginyl-tRNA(Arg) + AMP + diphosphate. The polypeptide is Arginine--tRNA ligase (Edwardsiella ictaluri (strain 93-146)).